Reading from the N-terminus, the 614-residue chain is Zinc metalloproteinase-disintegrin-like HR1b (614 aa).

The first 20 residues, 1-20, serve as a signal peptide directing secretion; sequence MIQVLLVTICLAVFPYQGSS. A propeptide spanning residues 21–191 is cleaved from the precursor; that stretch reads IILESGNVND…KASKLVVTAE (171 aa). Residue Gln-192 is modified to Pyrrolidone carboxylic acid. Residues 198-394 enclose the Peptidase M12B domain; that stretch reads RYIKLAIVVD…HKPQCILNAP (197 aa). A glycan (N-linked (GlcNAc...) asparagine) is linked at Asn-264. Cystine bridges form between Cys-309–Cys-389, Cys-349–Cys-373, and Cys-351–Cys-356. His-334 is a Zn(2+) binding site. Glu-335 is an active-site residue. Zn(2+) contacts are provided by His-338 and His-344. Asn-372 is a glycosylation site (N-linked (GlcNAc...) asparagine). Positions 395-398 are excised as a propeptide; sequence SKTD. One can recognise a Disintegrin domain in the interval 402–488; it reads PPVCGNELLE…DCPTDRFHRN (87 aa). Residues Val-404, Asn-407, Leu-409, Glu-411, Glu-414, and Asp-417 each coordinate Ca(2+). Disulfide bonds link Cys-405-Cys-424, Cys-405-Cys-434, Cys-416-Cys-429, Cys-416-Cys-434, Cys-418-Cys-424, Cys-428-Cys-451, Cys-442-Cys-448, Cys-447-Cys-473, Cys-460-Cys-480, Cys-467-Cys-492, Cys-467-Cys-499, Cys-492-Cys-504, Cys-499-Cys-504, Cys-511-Cys-526, Cys-511-Cys-561, Cys-526-Cys-568, Cys-539-Cys-549, Cys-549-Cys-556, Cys-556-Cys-593, Cys-561-Cys-568, Cys-587-Cys-598, and Cys-593-Cys-598. A D/ECD-tripeptide motif is present at residues 466-468; that stretch reads ECD. Residue Asn-518 is glycosylated (N-linked (GlcNAc...) asparagine). A glycan (N-linked (GlcNAc...) asparagine) is linked at Asn-571. Residues 608 to 614 constitute a propeptide that is removed on maturation; that stretch reads TTVFSLI.

Belongs to the venom metalloproteinase (M12B) family. P-III subfamily. P-IIIb sub-subfamily. Monomer. It depends on Zn(2+) as a cofactor. Expressed by the venom gland.

The protein resides in the secreted. Functionally, zinc protease that induces hemorrhage. Has preference for Tyr, Leu, Arg, Met, and Phe at the P1 position, in descending order (in vitro). Shows equal preference for the sequences of Ala-Asp and Arg-Ile at the P3-P2 position with different enzyme cleavage sites across the P1 position: the N-terminus side for Ala-Asp and the C-terminus side for Arg-Ile. Its function is as follows. Inhibits platelet aggregation induced by ADP, thrombin, platelet-activating factor and collagen. Acts by inhibiting fibrinogen interaction with platelet receptors alpha-IIb/beta-3 (ITGA2B/ITGB3). This Protobothrops flavoviridis (Habu) protein is Zinc metalloproteinase-disintegrin-like HR1b.